Reading from the N-terminus, the 62-residue chain is Sperm protamine P1 (62 aa).

Residues 1 to 62 (MARYRHSRSR…RYSRRRRRRY (62 aa)) form a disordered region.

It belongs to the protamine P1 family. In terms of tissue distribution, testis.

It localises to the nucleus. Its subcellular location is the chromosome. Its function is as follows. Protamines substitute for histones in the chromatin of sperm during the haploid phase of spermatogenesis. They compact sperm DNA into a highly condensed, stable and inactive complex. This chain is Sperm protamine P1 (PRM1), found in Bettongia penicillata (Brush-tailed bettong).